Here is a 1798-residue protein sequence, read N- to C-terminus: Non-reducing polyketide synthase nscA (1798 aa).

The N-terminal acylcarrier protein transacylase domain (SAT) stretch occupies residues 25–256 (RRLDQHSKDR…PLPVYDGLCH (232 aa)). Residues 392-825 (SSKLAIVGMA…GGNTTLLLED (434 aa)) enclose the Ketosynthase family 3 (KS3) domain. Positions 436–455 (NTHYDPTGKTENTTQTPYGN) are disordered. Residues 444-453 (KTENTTQTPY) show a composition bias toward polar residues. Active-site for beta-ketoacyl synthase activity residues include Cys-565, His-700, and His-743. The malonyl-CoA:ACP transacylase (MAT) domain stretch occupies residues 931 to 1230 (FTGQGAYYHG…PSASAMSSCR (300 aa)). An N-terminal hotdog fold region spans residues 1322 to 1458 (HQITAETVEA…AMIRFEDPVA (137 aa)). One can recognise a PKS/mFAS DH domain in the interval 1322-1632 (HQITAETVEA…FRRVPRLLMD (311 aa)). Residue His-1354 is the Proton acceptor; for dehydratase activity of the active site. The interval 1390–1628 (HMNLTDVEVL…GMIRFRRVPR (239 aa)) is product template (PT) domain. A C-terminal hotdog fold region spans residues 1486–1632 (ASRLSKPLAY…FRRVPRLLMD (147 aa)). The Proton donor; for dehydratase activity role is filled by Asp-1543. Positions 1685–1719 (MASKAPEPAPLLATSSESSTPKESPIVTPAESERA) are disordered. Residues 1698-1709 (TSSESSTPKESP) show a composition bias toward low complexity. One can recognise a Carrier domain in the interval 1721 to 1798 (PVDNNMISQC…EMTAWIEEYC (78 aa)). Ser-1758 carries the O-(pantetheine 4'-phosphoryl)serine modification.

Requires pantetheine 4'-phosphate as cofactor.

It participates in secondary metabolite biosynthesis. Functionally, non-reducing polyketide synthase; part of the gene cluster that mediates the biosynthesis of neosartoricin B, a prenylated anthracenone that probably exhibits T-cell antiproliferative activity, suggestive of a physiological role as an immunosuppressive agent. The non-reducing polyketide synthase nscA probably synthesizes and cyclizes the decaketide backbone. The hydrolase nscB then mediates the product release through hydrolysis followed by spontaneous decarboxylation. The prenyltransferase nscD catalyzes the addition of the dimethylallyl group to the aromatic C5. The FAD-dependent monooxygenase nscC is then responsible for the stereospecific hydroxylation at C2. Neosartoricin B can be converted into two additional compounds neosartoricins C and D. Neosartoricin C is a spirocyclic compound that is cyclized through the attack of C3 hydroxyl on C14, followed by dehydration. On the other hand, neosartoricin D is a further cyclized compound in which attack of C2 on C14 in neosartoricin C results in the formation of the acetal-containing dioxabicyclo-octanone ring. Both of these compounds are novel and possibly represent related metabolites of the gene cluster. In Arthroderma benhamiae (strain ATCC MYA-4681 / CBS 112371) (Trichophyton mentagrophytes), this protein is Non-reducing polyketide synthase nscA.